Reading from the N-terminus, the 378-residue chain is Mas-related G-protein coupled receptor MRG (378 aa).

Residues 1 to 77 (MVWGKICWFS…VGQQALPLNI (77 aa)) lie on the Extracellular side of the membrane. N-linked (GlcNAc...) asparagine glycosylation is found at asparagine 54 and asparagine 57. A helical transmembrane segment spans residues 78 to 101 (IAPKAVLVSLCGVLLNGTVFWLLC). The Cytoplasmic portion of the chain corresponds to 102–109 (CGATNPYM). The chain crosses the membrane as a helical span at residues 110 to 136 (VYILHLVAADVIYLCCSAVGFLQVTLL). Residues 137–154 (TYHGVVFFIPDFLAILSP) are Extracellular-facing. Residues 155–169 (FSFEVCLCLLVAIST) form a helical membrane-spanning segment. At 170 to 191 (ERCVCVLFPIWYRCHRPKYTSN) the chain is on the cytoplasmic side. The helical transmembrane segment at 192–207 (VVCTLIWGLPFCINIV) threads the bilayer. Residues 208 to 221 (KSLFLTYWKHVKAC) lie on the Extracellular side of the membrane. The helical transmembrane segment at 222–248 (VIFLKLSGLFHAILSLVMCVSSLTLLI) threads the bilayer. Over 249-264 (RFLCCSQQQKATRVYA) the chain is Cytoplasmic. The helical transmembrane segment at 265-286 (VVQISAPMFLLWALPLSVAPLI) threads the bilayer. Residues 287 to 297 (TDFKMFVTTSY) are Extracellular-facing. Residues 298–317 (LISLFLIINSSANPIIYFFV) traverse the membrane as a helical segment. The Cytoplasmic portion of the chain corresponds to 318–378 (GSLRKKRLKE…PREHRVDVET (61 aa)). Residues 344–378 (GRNKKAAGIDPMEQPHSTQHVENLLPREHRVDVET) are disordered. Basic and acidic residues predominate over residues 368-378 (LPREHRVDVET).

Belongs to the G-protein coupled receptor 1 family. Mas subfamily.

The protein localises to the cell membrane. The chain is Mas-related G-protein coupled receptor MRG (MAS1L) from Homo sapiens (Human).